Reading from the N-terminus, the 182-residue chain is Troponin I, fast skeletal muscle (182 aa).

Position 2 is an N-acetylglycine (Gly-2). An involved in binding TNC region spans residues 2–48 (GDEEKRNRAITARRQHLKSVMLQIAATELEKEESRRESEKENYLSEH). Thr-12 carries the phosphothreonine modification. Over residues 29–45 (ELEKEESRRESEKENYL) the composition is skewed to basic and acidic residues. Residues 29–53 (ELEKEESRRESEKENYLSEHCPPLH) form a disordered region. Residues 97–117 (NQKLFDLRGKFKRPPLRRVRM) form an involved in binding TNC and actin region. The residue at position 118 (Ser-118) is a Phosphoserine.

It belongs to the troponin I family. In terms of assembly, binds to actin and tropomyosin.

Troponin I is the inhibitory subunit of troponin, the thin filament regulatory complex which confers calcium-sensitivity to striated muscle actomyosin ATPase activity. In Mus musculus (Mouse), this protein is Troponin I, fast skeletal muscle (Tnni2).